Here is a 488-residue protein sequence, read N- to C-terminus: Coiled-coil domain-containing protein 77 (488 aa).

Residues 21–48 (GVAVSGPTKRRGMADSLESTPLPSPEDR) form a disordered region. Ser-36 is subject to Phosphoserine. A Glycyl lysine isopeptide (Lys-Gly) (interchain with G-Cter in SUMO2) cross-link involves residue Lys-51. Coiled coils occupy residues 55–118 (SKEL…QVCL) and 208–488 (KESS…LRLC). The segment at 192–213 (FKADPKISKRRPSRERKESSEH) is disordered.

The protein is Coiled-coil domain-containing protein 77 (CCDC77) of Homo sapiens (Human).